Reading from the N-terminus, the 368-residue chain is Acetyl-coenzyme A carboxylase carboxyl transferase subunit alpha (368 aa).

The region spanning 44 to 294 is the CoA carboxyltransferase C-terminal domain; sequence EIDNKLQEIY…RKSIEKNLNE (251 aa).

This sequence belongs to the AccA family. Acetyl-CoA carboxylase is a heterohexamer composed of biotin carboxyl carrier protein (AccB), biotin carboxylase (AccC) and two subunits each of ACCase subunit alpha (AccA) and ACCase subunit beta (AccD).

It localises to the cytoplasm. The enzyme catalyses N(6)-carboxybiotinyl-L-lysyl-[protein] + acetyl-CoA = N(6)-biotinyl-L-lysyl-[protein] + malonyl-CoA. Its pathway is lipid metabolism; malonyl-CoA biosynthesis; malonyl-CoA from acetyl-CoA: step 1/1. Its function is as follows. Component of the acetyl coenzyme A carboxylase (ACC) complex. First, biotin carboxylase catalyzes the carboxylation of biotin on its carrier protein (BCCP) and then the CO(2) group is transferred by the carboxyltransferase to acetyl-CoA to form malonyl-CoA. This chain is Acetyl-coenzyme A carboxylase carboxyl transferase subunit alpha, found in Pelagibacter ubique (strain HTCC1062).